The primary structure comprises 110 residues: UPF0060 membrane protein ASA_2267 (110 aa).

Helical transmembrane passes span 7–27 (IGLF…PYLW), 33–53 (SVWL…LLSL), 63–83 (AAYG…VDGI), and 87–107 (LWDL…MFAP).

The protein belongs to the UPF0060 family.

It localises to the cell inner membrane. The polypeptide is UPF0060 membrane protein ASA_2267 (Aeromonas salmonicida (strain A449)).